The primary structure comprises 91 residues: UPF0250 protein PSEEN4821 (91 aa).

The protein belongs to the UPF0250 family.

The chain is UPF0250 protein PSEEN4821 from Pseudomonas entomophila (strain L48).